Here is a 318-residue protein sequence, read N- to C-terminus: Guanidinopropionase (318 aa).

The Mn(2+) site is built by His-126, Asp-148, His-150, Asp-152, Asp-240, and Asp-242.

The protein belongs to the arginase family. Agmatinase subfamily. As to quaternary structure, homohexamer. Mn(2+) serves as cofactor.

It catalyses the reaction 3-guanidinopropanoate + H2O = urea + beta-alanine. Functionally, catalyzes the hydrolysis of 3-guanidinopropanoate to beta-alanine and urea. Possesses low activity against 4-guanidinobutanoate. Has no activity against arginine and agmatine. The polypeptide is Guanidinopropionase (gpuA) (Pseudomonas aeruginosa (strain ATCC 15692 / DSM 22644 / CIP 104116 / JCM 14847 / LMG 12228 / 1C / PRS 101 / PAO1)).